The following is a 133-amino-acid chain: Late embryogenesis abundant protein B19.3 (133 aa).

The tract at residues 1-133 is disordered; sequence MASGQQERSE…IDESKFKTKS (133 aa). Composition is skewed to basic and acidic residues over residues 7 to 19, 32 to 102, and 113 to 133; these read ERSE…REGE, EAQE…EMGR, and GGER…KTKS. Tandem repeats lie at residues 24–43, 44–63, and 64–83. The segment at 24-83 is 3 X 20 AA tandem repeats; the sequence is GGTGGKTLEAQEHLAEGRSRGGQTRKDQLGEEGYREMGHKGGETRKEQLGEEGYREMGHK.

The protein belongs to the small hydrophilic plant seed protein family.

Lea proteins are late embryonic proteins abundant in higher plant seed embryos. This Hordeum vulgare (Barley) protein is Late embryogenesis abundant protein B19.3 (B19.3).